A 251-amino-acid polypeptide reads, in one-letter code: uncharacterized protein (251 aa).

Positions 1–18 (MRILIILSIILCSLSIRA) are cleaved as a signal peptide.

It belongs to the MlaA family.

This is an uncharacterized protein from Rickettsia conorii (strain ATCC VR-613 / Malish 7).